We begin with the raw amino-acid sequence, 248 residues long: NH(3)-dependent NAD(+) synthetase (248 aa).

31 to 38 is a binding site for ATP; it reads GLSGGVDS. Residue aspartate 37 participates in Mg(2+) binding. Deamido-NAD(+) is bound at residue arginine 114. Threonine 134 lines the ATP pocket. Glutamate 139 is a binding site for Mg(2+). The deamido-NAD(+) site is built by lysine 147 and aspartate 154. ATP-binding residues include lysine 163 and threonine 185. 232–233 is a deamido-NAD(+) binding site; it reads HK.

It belongs to the NAD synthetase family. Homodimer.

The enzyme catalyses deamido-NAD(+) + NH4(+) + ATP = AMP + diphosphate + NAD(+) + H(+). It functions in the pathway cofactor biosynthesis; NAD(+) biosynthesis; NAD(+) from deamido-NAD(+) (ammonia route): step 1/1. Its function is as follows. Catalyzes the ATP-dependent amidation of deamido-NAD to form NAD. Uses ammonia as a nitrogen source. The sequence is that of NH(3)-dependent NAD(+) synthetase from Mycoplasma pneumoniae (strain ATCC 29342 / M129 / Subtype 1) (Mycoplasmoides pneumoniae).